The following is a 228-amino-acid chain: MEMERINANTIRVMLGNDDLAQRGITVLDLLGNHKQIESFFYSILDEVDKDHTFATNEAVTFQVMPSQSGLELLISKSGQKNDDSAADQTDDEGTDTQVPDYIRQQLQGLDASDQQDHQAVDEGGYIDADKAPQTELVLKLKDFEDFISLADTLRLEGGKSDLYRYKNAYYLVLTFYPNEISSDEAHDQMAVAMEFGDRSPLSSAVLSEYGKRLMETSALETARYYFK.

It belongs to the MecA family. Homodimer.

Its function is as follows. Enables the recognition and targeting of unfolded and aggregated proteins to the ClpC protease or to other proteins involved in proteolysis. The chain is Adapter protein MecA from Lacticaseibacillus paracasei (strain ATCC 334 / BCRC 17002 / CCUG 31169 / CIP 107868 / KCTC 3260 / NRRL B-441) (Lactobacillus paracasei).